The following is a 279-amino-acid chain: 4-diphosphocytidyl-2-C-methyl-D-erythritol kinase (279 aa).

K10 is an active-site residue. 91–101 contacts ATP; it reads PVASGIGGGSA. D130 is a catalytic residue.

Belongs to the GHMP kinase family. IspE subfamily.

The enzyme catalyses 4-CDP-2-C-methyl-D-erythritol + ATP = 4-CDP-2-C-methyl-D-erythritol 2-phosphate + ADP + H(+). The protein operates within isoprenoid biosynthesis; isopentenyl diphosphate biosynthesis via DXP pathway; isopentenyl diphosphate from 1-deoxy-D-xylulose 5-phosphate: step 3/6. Functionally, catalyzes the phosphorylation of the position 2 hydroxy group of 4-diphosphocytidyl-2C-methyl-D-erythritol. The sequence is that of 4-diphosphocytidyl-2-C-methyl-D-erythritol kinase from Ruegeria pomeroyi (strain ATCC 700808 / DSM 15171 / DSS-3) (Silicibacter pomeroyi).